The sequence spans 193 residues: Phosphoheptose isomerase (193 aa).

The SIS domain maps to 37 to 193 (LADSFKAGGK…MLIEKEMAKG (157 aa)). 52–54 (NGG) contributes to the substrate binding site. Residues histidine 61 and glutamate 65 each coordinate Zn(2+). Substrate contacts are provided by residues glutamate 65, 93 to 94 (ND), 119 to 121 (STS), serine 124, and glutamine 172. Residues glutamine 172 and histidine 180 each contribute to the Zn(2+) site.

Belongs to the SIS family. GmhA subfamily. In terms of assembly, homotetramer. Zn(2+) serves as cofactor.

The protein localises to the cytoplasm. The catalysed reaction is 2 D-sedoheptulose 7-phosphate = D-glycero-alpha-D-manno-heptose 7-phosphate + D-glycero-beta-D-manno-heptose 7-phosphate. It functions in the pathway carbohydrate biosynthesis; D-glycero-D-manno-heptose 7-phosphate biosynthesis; D-glycero-alpha-D-manno-heptose 7-phosphate and D-glycero-beta-D-manno-heptose 7-phosphate from sedoheptulose 7-phosphate: step 1/1. Its function is as follows. Catalyzes the isomerization of sedoheptulose 7-phosphate in D-glycero-D-manno-heptose 7-phosphate. This is Phosphoheptose isomerase from Klebsiella pneumoniae subsp. pneumoniae (strain ATCC 700721 / MGH 78578).